A 431-amino-acid chain; its full sequence is Tol-Pal system protein TolB (431 aa).

The signal sequence occupies residues 1 to 26 (MSLMTKLGFRALVASCLITAGSAANA). Residues 406–431 (DGSAPPQILSVQGGSVREPSWGPFMQ) are disordered.

This sequence belongs to the TolB family. As to quaternary structure, the Tol-Pal system is composed of five core proteins: the inner membrane proteins TolA, TolQ and TolR, the periplasmic protein TolB and the outer membrane protein Pal. They form a network linking the inner and outer membranes and the peptidoglycan layer.

The protein localises to the periplasm. Part of the Tol-Pal system, which plays a role in outer membrane invagination during cell division and is important for maintaining outer membrane integrity. The sequence is that of Tol-Pal system protein TolB from Burkholderia orbicola (strain AU 1054).